Reading from the N-terminus, the 103-residue chain is MANQKIRIRLKAYDYALIDRFAQEIVETAKRTGAVVKGPIPLPTKIERFNILRSPHMNKTSREQLEIRTHLRLMDIVDWTDKTTDALMKLDLPAGVDVEIKVQ.

Belongs to the universal ribosomal protein uS10 family. Part of the 30S ribosomal subunit.

In terms of biological role, involved in the binding of tRNA to the ribosomes. The polypeptide is Small ribosomal subunit protein uS10 (Neisseria gonorrhoeae (strain NCCP11945)).